We begin with the raw amino-acid sequence, 535 residues long: Xylan 1,3-beta-xylosidase (535 aa).

The active-site Proton acceptor is the Asp16. Glu189 acts as the Proton donor in catalysis.

It belongs to the glycosyl hydrolase 43 family.

The enzyme catalyses Hydrolysis of successive xylose residues from the non-reducing termini of (1-&gt;3)-beta-D-xylans.. With respect to regulation, inhibited by Ag(+), Cu(2+), Hg(2+), Mn(2+), Pb(2+), Zn(2+) and p-chloromercuric benzoic acid. In terms of biological role, beta-1,3-xylosidase that hydrolyzes beta-1,3-xylooligosaccharides to D-xylose. This is Xylan 1,3-beta-xylosidase (xloA) from Vibrio sp.